The sequence spans 554 residues: Membrane protein insertase YidC (554 aa).

5 helical membrane passes run 7 to 24 (VLWVIFFMSAVMLYDNWQ), 362 to 382 (FVGNWGWAIVLLTVLIKAVFF), 436 to 456 (LPVVIQIPVFISLYWVLLASV), 475 to 495 (PFFILPVLMAVSMFVQTSLNP), and 510 to 530 (PIAFSVMFFFFPAGLVLYYVV).

The protein belongs to the OXA1/ALB3/YidC family. Type 1 subfamily. In terms of assembly, interacts with the Sec translocase complex via SecD. Specifically interacts with transmembrane segments of nascent integral membrane proteins during membrane integration.

It localises to the cell inner membrane. Required for the insertion and/or proper folding and/or complex formation of integral membrane proteins into the membrane. Involved in integration of membrane proteins that insert both dependently and independently of the Sec translocase complex, as well as at least some lipoproteins. Aids folding of multispanning membrane proteins. The protein is Membrane protein insertase YidC of Burkholderia ambifaria (strain MC40-6).